We begin with the raw amino-acid sequence, 175 residues long: Vesicle-associated membrane protein-associated protein SCS22 (175 aa).

One can recognise an MSP domain in the interval 1–125 (MRIVPEKLVF…DDIVFKKIKI (125 aa)). The Cytoplasmic segment spans residues 1–154 (MRIVPEKLVF…RAPSAGNGQS (154 aa)). The segment at 133 to 152 (RKPSGNHDAESARAPSAGNG) is disordered. A helical; Anchor for type IV membrane protein membrane pass occupies residues 155–175 (LSSRALLIITVIALLVGWIYY).

It belongs to the VAMP-associated protein (VAP) (TC 9.B.17) family.

It is found in the membrane. Targets proteins containing a FFAT motif to membranes. Involved in regulation of phospholipid metabolism. This chain is Vesicle-associated membrane protein-associated protein SCS22 (SCS22), found in Saccharomyces cerevisiae (strain ATCC 204508 / S288c) (Baker's yeast).